Here is a 241-residue protein sequence, read N- to C-terminus: Small ribosomal subunit protein uS3 (241 aa).

A KH type-2 domain is found at Ile-39–Glu-108. Residues Ser-215–Lys-241 are disordered. The segment covering Asn-232–Lys-241 has biased composition (low complexity).

The protein belongs to the universal ribosomal protein uS3 family. Part of the 30S ribosomal subunit. Forms a tight complex with proteins S10 and S14.

Binds the lower part of the 30S subunit head. Binds mRNA in the 70S ribosome, positioning it for translation. The chain is Small ribosomal subunit protein uS3 from Mesoplasma florum (strain ATCC 33453 / NBRC 100688 / NCTC 11704 / L1) (Acholeplasma florum).